A 396-amino-acid polypeptide reads, in one-letter code: tRNA (guanine(9)-N1)-methyltransferase (396 aa).

2 stretches are compositionally biased toward basic and acidic residues: residues 1-18 (MEDD…HDEV) and 52-73 (DRID…HGKD). A disordered region spans residues 1–109 (MEDDDRPRKY…KVKRKEKLVA (109 aa)). Positions 139 to 357 (TQKKFQRSTL…QVIPQRKGGK (219 aa)) constitute an SAM-dependent MTase TRM10-type domain. Residues 264–265 (LS), glycine 284, 288–292 (DKNRH), cysteine 296, leucine 310, and 322–324 (QVL) each bind S-adenosyl-L-methionine. Residue aspartate 288 is the Proton acceptor of the active site. The interval 354-396 (KGGKLKSADHESEDQTPRESVEAVEAEPDGEGAAAEAGEGGKE) is disordered. The segment covering 359 to 374 (KSADHESEDQTPRESV) has biased composition (basic and acidic residues).

This sequence belongs to the class IV-like SAM-binding methyltransferase superfamily. TRM10 family. Monomer.

It is found in the cytoplasm. The protein resides in the nucleus. It catalyses the reaction guanosine(9) in tRNA + S-adenosyl-L-methionine = N(1)-methylguanosine(9) in tRNA + S-adenosyl-L-homocysteine + H(+). Functionally, S-adenosyl-L-methionine-dependent guanine N(1)-methyltransferase that catalyzes the formation of N(1)-methylguanine at position 9 (m1G9) in cytoplasmic tRNA. In Aspergillus fumigatus (strain ATCC MYA-4609 / CBS 101355 / FGSC A1100 / Af293) (Neosartorya fumigata), this protein is tRNA (guanine(9)-N1)-methyltransferase.